A 156-amino-acid chain; its full sequence is Small ribosomal subunit protein uS7c (156 aa).

It belongs to the universal ribosomal protein uS7 family. As to quaternary structure, part of the 30S ribosomal subunit.

The protein resides in the plastid. Its subcellular location is the chloroplast. Functionally, one of the primary rRNA binding proteins, it binds directly to 16S rRNA where it nucleates assembly of the head domain of the 30S subunit. This chain is Small ribosomal subunit protein uS7c (rps7), found in Gracilaria tenuistipitata var. liui (Red alga).